Here is a 209-residue protein sequence, read N- to C-terminus: Ribosomal RNA large subunit methyltransferase E (209 aa).

Gly-63, Trp-65, Asp-83, Asp-99, and Asp-124 together coordinate S-adenosyl-L-methionine. The Proton acceptor role is filled by Lys-164.

This sequence belongs to the class I-like SAM-binding methyltransferase superfamily. RNA methyltransferase RlmE family.

The protein localises to the cytoplasm. The catalysed reaction is uridine(2552) in 23S rRNA + S-adenosyl-L-methionine = 2'-O-methyluridine(2552) in 23S rRNA + S-adenosyl-L-homocysteine + H(+). In terms of biological role, specifically methylates the uridine in position 2552 of 23S rRNA at the 2'-O position of the ribose in the fully assembled 50S ribosomal subunit. The polypeptide is Ribosomal RNA large subunit methyltransferase E (Serratia proteamaculans (strain 568)).